We begin with the raw amino-acid sequence, 202 residues long: Small ribosomal subunit protein uS4c (202 aa).

The S4 RNA-binding domain maps to Met-90–Ile-153.

This sequence belongs to the universal ribosomal protein uS4 family. In terms of assembly, part of the 30S ribosomal subunit. Contacts protein S5. The interaction surface between S4 and S5 is involved in control of translational fidelity.

The protein resides in the plastid. The protein localises to the chloroplast. In terms of biological role, one of the primary rRNA binding proteins, it binds directly to 16S rRNA where it nucleates assembly of the body of the 30S subunit. With S5 and S12 plays an important role in translational accuracy. The protein is Small ribosomal subunit protein uS4c (rps4) of Hypopterygium laricinum (Moss).